The sequence spans 364 residues: Protein L-Myc (364 aa).

3 disordered regions span residues 41–81, 111–172, and 219–285; these read TSPP…HSKG, DRLA…EIDV, and PPES…KRKN. Residues 228-245 are compositionally biased toward basic and acidic residues; sequence ASERGPQEEVLERDAAGE. One can recognise a bHLH domain in the interval 281-333; it reads TKRKNHNFLERKRRNDLRSRFLALRDQVPTLASCSKAPKVVILSKALEYLQAL. The interval 333-361 is leucine-zipper; the sequence is LVGAEKRMATEKRQLRCRQQQLQKRIAYL.

Efficient DNA binding requires dimerization with another bHLH protein. Binds DNA as a heterodimer with MAX.

The protein resides in the nucleus. This is Protein L-Myc (MYCL) from Homo sapiens (Human).